The following is a 23-amino-acid chain: Ocellatin-LB2 (23 aa).

N23 is subject to Asparagine amide.

In terms of tissue distribution, expressed by the skin glands.

It localises to the secreted. In terms of biological role, antibacterial peptide that inhibits the Gram-negative bacterium A.actinomycetemcomitans ATCC 29522 (MIC=210 uM). No activity against the bacteria E.coli ATCC 25922 and S.aureus ATCC 25923, or the fungi C.albicans ATCC 18804 and C.lusitaniae ATCC 56936. Does not show hemolytic activity towards rabbit erythrocytes. This Leptodactylus labyrinthicus (Labyrinth frog) protein is Ocellatin-LB2.